The primary structure comprises 307 residues: NADH-ubiquinone oxidoreductase chain 2 (307 aa).

10 helical membrane-spanning segments follow: residues 1 to 21, 25 to 45, 58 to 78, 88 to 108, 119 to 139, 144 to 164, 193 to 213, 217 to 237, 250 to 270, and 287 to 307; these read MTLQSVLLGAMIILGPILSMT, WIIIWIGLEISLLGFVSYYML, YFLIQSVSSTVMLLNGLYIFV, FIFITMLMLKIGMFPLHFWII, IGIVGLLLKIVPMWILMHMGC, MLNLITMLSVTSMLFGALIGM, LFKYFITYGFSLVILLVFLYL, MSISLSLLSLSGLPPFMLFIG, LWFIVLVFAILSAVISLVYYL, and HYKMAMFLLVNVTFGMLLFLT.

The protein belongs to the complex I subunit 2 family.

The protein resides in the mitochondrion inner membrane. The enzyme catalyses a ubiquinone + NADH + 5 H(+)(in) = a ubiquinol + NAD(+) + 4 H(+)(out). Its function is as follows. Core subunit of the mitochondrial membrane respiratory chain NADH dehydrogenase (Complex I) that is believed to belong to the minimal assembly required for catalysis. Complex I functions in the transfer of electrons from NADH to the respiratory chain. The immediate electron acceptor for the enzyme is believed to be ubiquinone. The chain is NADH-ubiquinone oxidoreductase chain 2 (ND2) from Albinaria caerulea (Land snail).